A 157-amino-acid chain; its full sequence is uncharacterized protein (157 aa).

This is an uncharacterized protein from Rickettsia prowazekii (strain Madrid E).